Reading from the N-terminus, the 935-residue chain is Mannosyltransferase regulator 14 (935 aa).

Topologically, residues 1-21 (MMLSLRRFSMYVLRSLRLHFK) are cytoplasmic. A helical; Signal-anchor for type II membrane protein transmembrane segment spans residues 22 to 42 (KIIITLLTIQLLFITIFVLGG). Residues 43 to 935 (RSSIIDGNWK…NNIFGSDQKY (893 aa)) are Lumenal-facing. Residues 498–500 (DHD) carry the DXD motif.

The protein belongs to the MNN4 family.

The protein localises to the golgi apparatus membrane. Functionally, plays a role in N-glycan mannosylphosphorylation and has partially redundant function with MNN4. This is Mannosyltransferase regulator 14 from Saccharomyces cerevisiae (strain ATCC 204508 / S288c) (Baker's yeast).